The primary structure comprises 200 residues: Large ribosomal subunit protein bL25 (200 aa).

This sequence belongs to the bacterial ribosomal protein bL25 family. CTC subfamily. As to quaternary structure, part of the 50S ribosomal subunit; part of the 5S rRNA/L5/L18/L25 subcomplex. Contacts the 5S rRNA. Binds to the 5S rRNA independently of L5 and L18.

Its function is as follows. This is one of the proteins that binds to the 5S RNA in the ribosome where it forms part of the central protuberance. The protein is Large ribosomal subunit protein bL25 of Corynebacterium glutamicum (strain ATCC 13032 / DSM 20300 / JCM 1318 / BCRC 11384 / CCUG 27702 / LMG 3730 / NBRC 12168 / NCIMB 10025 / NRRL B-2784 / 534).